The primary structure comprises 306 residues: Bacitracin transport ATP-binding protein BcrA (306 aa).

An ABC transporter domain is found at Ile5–Ser233. Gly37 to Thr44 is a binding site for ATP.

Belongs to the ABC transporter superfamily.

In terms of biological role, part of the binding-protein-dependent transport system for bacitracin that confer resistance to this antibiotic. Probably responsible for energy coupling to the transport system. This is Bacitracin transport ATP-binding protein BcrA (bcrA) from Bacillus licheniformis.